The primary structure comprises 315 residues: Peroxidase 1 (315 aa).

Positions 1-21 (MASSSYTSLLVLVALVTAASA) are cleaved as a signal peptide. A Pyrrolidone carboxylic acid modification is found at Gln-22. Cystine bridges form between Cys-32–Cys-107, Cys-65–Cys-70, Cys-113–Cys-310, and Cys-193–Cys-219. His-63 acts as the Proton acceptor in catalysis. Positions 64, 67, 69, 71, and 73 each coordinate Ca(2+). Substrate is bound at residue Pro-155. Asn-158 carries an N-linked (GlcNAc...) asparagine glycan. His-186 lines the heme b pocket. Thr-187 serves as a coordination point for Ca(2+). Ca(2+)-binding residues include Asp-234, Thr-237, and Asp-242. Asn-265 is a glycosylation site (N-linked (GlcNAc...) asparagine).

Belongs to the peroxidase family. Classical plant (class III) peroxidase subfamily. Ca(2+) is required as a cofactor. Heme b serves as cofactor.

The protein localises to the secreted. The catalysed reaction is 2 a phenolic donor + H2O2 = 2 a phenolic radical donor + 2 H2O. In terms of biological role, removal of H(2)O(2), oxidation of toxic reductants, biosynthesis and degradation of lignin, suberization, auxin catabolism, response to environmental stresses such as wounding, pathogen attack and oxidative stress. These functions might be dependent on each isozyme/isoform in each plant tissue. Involved in defense response to powdery meldew fungus. This Hordeum vulgare (Barley) protein is Peroxidase 1.